A 361-amino-acid chain; its full sequence is Hydroxycarboxylate dehydrogenase B (361 aa).

NAD(+) contacts are provided by residues His48, 122–124, 178–182, His234, Asn270, and 313–316; these read GRI, LLDYA, and GEWE.

Belongs to the LDH2/MDH2 oxidoreductase family.

The catalysed reaction is 2-hydroxyglutarate + NADP(+) = 2-oxoglutarate + NADPH + H(+). The enzyme catalyses 2-hydroxyglutarate + NAD(+) = 2-oxoglutarate + NADH + H(+). It carries out the reaction 3-phenyllactate + NADP(+) = 3-phenylpyruvate + NADPH + H(+). It catalyses the reaction 3-phenyllactate + NAD(+) = 3-phenylpyruvate + NADH + H(+). The catalysed reaction is (2R)-2-hydroxy-3-(4-hydroxyphenyl)propanoate + NAD(+) = 3-(4-hydroxyphenyl)pyruvate + NADH + H(+). The enzyme catalyses (2R)-2-hydroxy-3-(4-hydroxyphenyl)propanoate + NADP(+) = 3-(4-hydroxyphenyl)pyruvate + NADPH + H(+). It carries out the reaction (2R)-3-(3,4-dihydroxyphenyl)lactate + NADP(+) = 3-(3,4-dihydroxyphenyl)pyruvate + NADPH + H(+). It catalyses the reaction (2R)-3-(3,4-dihydroxyphenyl)lactate + NAD(+) = 3-(3,4-dihydroxyphenyl)pyruvate + NADH + H(+). Its function is as follows. Catalyzes the NAD(P)H-dependent reduction of 2-oxoglutarate, phenylpyruvate and (4-hydroxyphenyl)pyruvate, leading to the respective 2-hydroxycarboxylate in vitro. Shows a preference for NADPH over NADH as a redox partner. Do not catalyze the reverse reactions. The polypeptide is Hydroxycarboxylate dehydrogenase B (Escherichia coli (strain K12)).